The primary structure comprises 95 residues: RING finger protein Z (95 aa).

Gly2 carries the N-myristoyl glycine; by host lipid modification. An RING-type; atypical zinc finger spans residues 38 to 74 (CKRCWFATKGLIACSDHYLCLNCLTIMLSDGNFCEVC). Positions 88–91 (PSAP) match the PTAP/PSAP motif motif.

Belongs to the arenaviridae Z protein family. As to quaternary structure, interacts with protein NP; this interaction probably directs the encapsidated genome to budding sites. Interacts (via RING domain) with polymerase L; this interaction inhibits viral transcription and replication, Z partially blocks the product exit tunnel for the releasing nascent RNA product. Interacts with the glycoprotein complex; this interaction plays a role in virion budding. Interacts with host eIF4E; this interaction results in eIF4E reduced affinity for its substrate, the 5'-m7 G cap structure. Interacts (via late-budding domain) with host TSG101; this interaction is essential for budding and release of viral particles. Interacts with host RPLP0; this interaction may serve to load ribosome-like particles inside the virion. Interacts with host PML; this interaction induces PML bodies redistribution in the cytoplasm upon viral infection. Post-translationally, myristoylation is required for the role of RING finger protein Z in assembly and budding.

It is found in the virion. Its subcellular location is the host cytoplasm. It localises to the host perinuclear region. The protein resides in the host cell membrane. In terms of biological role, plays a crucial role in virion assembly and budding. Expressed late in the virus life cycle, it acts as an inhibitor of viral transcription and RNA synthesis by interacting with the viral polymerase L. Presumably recruits the NP encapsidated genome to cellular membranes at budding sites via direct interaction with NP. Plays critical roles in the final steps of viral release by interacting with host TSG101, a member of the vacuolar protein-sorting pathway and using other cellular host proteins involved in vesicle formation pathway. The budding of the virus progeny occurs after association of protein Z with the viral glycoprotein complex SSP-GP1-GP2 at the cell periphery, step that requires myristoylation of protein Z. Also selectively represses protein production by associating with host eIF4E. In cell-based minigenome assay, has an inhibitory effect on the ribonucleoprotein machinery (vRNP), which is responsible for the replication and transcription of the viral genome. This Sooretamys angouya (Paraguayan rice rat) protein is RING finger protein Z.